The following is a 134-amino-acid chain: Small ribosomal subunit protein uS9 (134 aa).

A disordered region spans residues 109 to 134; that stretch reads DARRTEPHKPSKSSKGPRAKRQKSYR. The span at 118 to 134 shows a compositional bias: basic residues; it reads PSKSSKGPRAKRQKSYR.

It belongs to the universal ribosomal protein uS9 family.

The protein is Small ribosomal subunit protein uS9 of Methanococcus maripaludis (strain C5 / ATCC BAA-1333).